Reading from the N-terminus, the 184-residue chain is MADKYEPRLKTEYVSRIRGAMQEKFSYANVMMIPKLDKIVINMGVGEATADSKKPTIAAGDLAAIAGQKPVITKARNSIAGFKVREHMPIGAKVTLRGERMYEFLDRLINIALPRVRDFRGLNPKSFDGRGNFAMGIKEHIVFPEINYDKVDQMWGMDIIVCTTATSDDEARALLTEFNFPFRH.

It belongs to the universal ribosomal protein uL5 family. In terms of assembly, part of the 50S ribosomal subunit; part of the 5S rRNA/L5/L18/L25 subcomplex. Contacts the 5S rRNA and the P site tRNA. Forms a bridge to the 30S subunit in the 70S ribosome.

This is one of the proteins that bind and probably mediate the attachment of the 5S RNA into the large ribosomal subunit, where it forms part of the central protuberance. In the 70S ribosome it contacts protein S13 of the 30S subunit (bridge B1b), connecting the 2 subunits; this bridge is implicated in subunit movement. Contacts the P site tRNA; the 5S rRNA and some of its associated proteins might help stabilize positioning of ribosome-bound tRNAs. The polypeptide is Large ribosomal subunit protein uL5 (Agrobacterium fabrum (strain C58 / ATCC 33970) (Agrobacterium tumefaciens (strain C58))).